The following is a 380-amino-acid chain: Sialidase-2 (380 aa).

The FRIP motif signature appears at 20–23 (YRIP). Substrate is bound by residues R21 and R41. The active-site Proton acceptor is the D46. One copy of the BNR 1 repeat lies at 127 to 138 (VTSTDHGRTWSS). Substrate contacts are provided by Y179 and Y181. The BNR 2 repeat unit spans residues 197–208 (FLSHDHGRTWAR). Substrate is bound by residues E218, R237, and R304. Residue Y334 is the Nucleophile of the active site. Residue E355 is part of the active site.

This sequence belongs to the glycosyl hydrolase 33 family. Expressed in skeletal muscle, fetal liver and embryonic carcinoma cell line NT2-D1.

The protein localises to the cytoplasm. It is found in the cytosol. It catalyses the reaction Hydrolysis of alpha-(2-&gt;3)-, alpha-(2-&gt;6)-, alpha-(2-&gt;8)- glycosidic linkages of terminal sialic acid residues in oligosaccharides, glycoproteins, glycolipids, colominic acid and synthetic substrates.. It carries out the reaction a ganglioside GD1a + H2O = a ganglioside GM1 + N-acetylneuraminate. The enzyme catalyses a ganglioside GM1 + H2O = a ganglioside GA1 + N-acetylneuraminate. The catalysed reaction is a ganglioside GT1b + H2O = a ganglioside GD1b + N-acetylneuraminate. It catalyses the reaction a ganglioside GD1b + H2O = a ganglioside GM1 + N-acetylneuraminate. It carries out the reaction a ganglioside GD3 + H2O = a ganglioside GM3 + N-acetylneuraminate. The enzyme catalyses a ganglioside GM3 + H2O = a beta-D-galactosyl-(1-&gt;4)-beta-D-glucosyl-(1&lt;-&gt;1)-ceramide + N-acetylneuraminate. The catalysed reaction is a ganglioside GM2 + H2O = a ganglioside GA2 + N-acetylneuraminate. It catalyses the reaction a neolactoside IV(3)-alpha-NeuAc-nLc4Cer(d18:1(4E)) + H2O = a neolactoside nLc4Cer(d18:1(4E)) + N-acetylneuraminate. It carries out the reaction N-acetyl-alpha-neuraminosyl-(2-&gt;3)-beta-D-galactosyl-(1-&gt;4)-D-glucose + H2O = lactose + N-acetylneuraminate. Exo-alpha-sialidase that catalyzes the hydrolytic cleavage of the terminal sialic acid (N-acetylneuraminic acid, Neu5Ac) of a glycan moiety in the catabolism of glycolipids, glycoproteins and oligosacharides. Recognizes sialyl linkage positions of the glycan moiety as well as the supramolecular organization of the sialoglycoconjugate. Displays preference for alpha-(2-&gt;3)-sialylated GD1a and GT1B gangliosides over alpha-(2-&gt;8)-sialylated GD1b, in both monomeric forms and micelles. Hydrolyzes monomeric GM1 ganglioside, but has no activity toward the miscellar form. Has lower sialidase activity for glycoproteins such as fetuin and TF/transferrin that carry a mixture of alpha-(2-&gt;3) and alpha-(2-&gt;6)-sialyl linkages. Cleaves milk oligosaccharide alpha-(2-&gt;3)-sialyllactose, but is inactive toward alpha-(2-&gt;6)-sialyllactose isomer. Has no activity toward colominic acid, a homomer of alpha-(2-&gt;8)-linked Neu5Ac residues. This is Sialidase-2 (NEU2) from Homo sapiens (Human).